Reading from the N-terminus, the 72-residue chain is Crustacean hyperglycemic hormone (72 aa).

3 disulfide bridges follow: cysteine 7/cysteine 43, cysteine 23/cysteine 39, and cysteine 26/cysteine 52. Valine 72 is subject to Valine amide.

The protein resides in the secreted. Hormone found in the sinus gland of isopods and decapods which controls the blood sugar level. Has a secretagogue action over the amylase released from the midgut gland. May act as a stress hormone and may be involved in the control of molting and reproduction. The protein is Crustacean hyperglycemic hormone of Penaeus schmitti (White shrimp).